The chain runs to 345 residues: Probable fructokinase-3 (345 aa).

Belongs to the carbohydrate kinase PfkB family.

It carries out the reaction D-fructose + ATP = D-fructose 6-phosphate + ADP + H(+). The protein operates within glycan biosynthesis; starch biosynthesis. Its function is as follows. May play an important role in maintaining the flux of carbon towards starch formation. The sequence is that of Probable fructokinase-3 from Arabidopsis thaliana (Mouse-ear cress).